The chain runs to 146 residues: Inner membrane protein YdgK (146 aa).

The Cytoplasmic segment spans residues 1–12 (MTTTTPQRIGGW). Residues 13 to 33 (LLGPLAWLLVALLSTTLALLL) form a helical membrane-spanning segment. Over 34-59 (YTAALSSPQTFQTLGGQALTTQILWG) the chain is Periplasmic. A helical transmembrane segment spans residues 60-80 (VSFITAIALWYYTLWLTIAFF). At 81 to 89 (KRRRCVPKH) the chain is on the cytoplasmic side. The helical transmembrane segment at 90–110 (YIIWLLISVLLAVKAFAFSPV) threads the bilayer. At 111–112 (ED) the chain is on the periplasmic side. The helical transmembrane segment at 113 to 133 (GIAVRQLLFTLLATALIVPYF) threads the bilayer. The Cytoplasmic portion of the chain corresponds to 134–146 (KRSSRVKATFVNP).

To Synechocystis PCC 6803 sll0481.

It is found in the cell inner membrane. This is Inner membrane protein YdgK (ydgK) from Escherichia coli (strain K12).